We begin with the raw amino-acid sequence, 176 residues long: MASTTSRSARPARRNNKAAGSTTPLLWLAFALLVVLLDQFFKIVIVRSFTYGESRPVTGFFNLVLVYNKGAAFSFLADAGGWQRWFFTGLGVVVGAFIVWLLYRHTGQRLFCFAVSLILGGAVGNVVDRVIYGHVIDFLDFYVGRYHWPAFNVADCAITVGAVLLIVDELRRVRKH.

Transmembrane regions (helical) follow at residues 26–46 (LWLA…IVIV), 57–77 (VTGF…SFLA), 82–102 (WQRW…VWLL), and 111–131 (FCFA…DRVI). Active-site residues include Asp-137 and Asp-155. A helical membrane pass occupies residues 147–167 (HWPAFNVADCAITVGAVLLIV).

This sequence belongs to the peptidase A8 family.

It is found in the cell inner membrane. The catalysed reaction is Release of signal peptides from bacterial membrane prolipoproteins. Hydrolyzes -Xaa-Yaa-Zaa-|-(S,diacylglyceryl)Cys-, in which Xaa is hydrophobic (preferably Leu), and Yaa (Ala or Ser) and Zaa (Gly or Ala) have small, neutral side chains.. It participates in protein modification; lipoprotein biosynthesis (signal peptide cleavage). Its function is as follows. This protein specifically catalyzes the removal of signal peptides from prolipoproteins. In Cupriavidus taiwanensis (strain DSM 17343 / BCRC 17206 / CCUG 44338 / CIP 107171 / LMG 19424 / R1) (Ralstonia taiwanensis (strain LMG 19424)), this protein is Lipoprotein signal peptidase.